A 307-amino-acid polypeptide reads, in one-letter code: Elongation factor Ts (307 aa).

The involved in Mg(2+) ion dislocation from EF-Tu stretch occupies residues 80 to 83 (TDFV).

It belongs to the EF-Ts family.

The protein localises to the cytoplasm. In terms of biological role, associates with the EF-Tu.GDP complex and induces the exchange of GDP to GTP. It remains bound to the aminoacyl-tRNA.EF-Tu.GTP complex up to the GTP hydrolysis stage on the ribosome. The polypeptide is Elongation factor Ts (Clostridium botulinum (strain Loch Maree / Type A3)).